The sequence spans 327 residues: ATP-dependent 6-phosphofructokinase (327 aa).

Glycine 12 is an ATP binding site. ADP contacts are provided by residues 22–26 and 55–60; these read RGVVR and RYSVSD. ATP is bound by residues 73–74 and 103–106; these read RF and GDGS. Position 104 (aspartate 104) interacts with Mg(2+). 127-129 is a substrate binding site; it reads TID. The active-site Proton acceptor is aspartate 129. ADP is bound at residue arginine 156. Substrate is bound by residues arginine 164 and 171-173; that span reads MGR. Residues 187 to 189, lysine 213, and 215 to 217 contribute to the ADP site; these read GCE and KKH. Substrate is bound by residues glutamate 224, arginine 245, and 251–254; that span reads HIQR.

It belongs to the phosphofructokinase type A (PFKA) family. ATP-dependent PFK group I subfamily. Prokaryotic clade 'B1' sub-subfamily. As to quaternary structure, homotetramer. The cofactor is Mg(2+).

The protein resides in the cytoplasm. It catalyses the reaction beta-D-fructose 6-phosphate + ATP = beta-D-fructose 1,6-bisphosphate + ADP + H(+). It functions in the pathway carbohydrate degradation; glycolysis; D-glyceraldehyde 3-phosphate and glycerone phosphate from D-glucose: step 3/4. Allosterically activated by ADP and other diphosphonucleosides, and allosterically inhibited by phosphoenolpyruvate. Catalyzes the phosphorylation of D-fructose 6-phosphate to fructose 1,6-bisphosphate by ATP, the first committing step of glycolysis. The protein is ATP-dependent 6-phosphofructokinase of Yersinia pseudotuberculosis serotype IB (strain PB1/+).